The chain runs to 265 residues: Pyrroline-5-carboxylate reductase (265 aa).

Belongs to the pyrroline-5-carboxylate reductase family.

Its subcellular location is the cytoplasm. The enzyme catalyses L-proline + NADP(+) = (S)-1-pyrroline-5-carboxylate + NADPH + 2 H(+). It carries out the reaction L-proline + NAD(+) = (S)-1-pyrroline-5-carboxylate + NADH + 2 H(+). Its pathway is amino-acid biosynthesis; L-proline biosynthesis; L-proline from L-glutamate 5-semialdehyde: step 1/1. Its function is as follows. Catalyzes the reduction of 1-pyrroline-5-carboxylate (PCA) to L-proline. The chain is Pyrroline-5-carboxylate reductase from Aquifex aeolicus (strain VF5).